A 134-amino-acid polypeptide reads, in one-letter code: Cytochrome b (134 aa).

Transmembrane regions (helical) follow at residues 33–53 (FGSL…FLAI), 77–98 (WLLR…YLHV), and 113–133 (WNIG…GYVL). Residues His-83 and His-97 each contribute to the heme b site.

It belongs to the cytochrome b family. As to quaternary structure, the cytochrome bc1 complex contains 11 subunits: 3 respiratory subunits (MT-CYB, CYC1 and UQCRFS1), 2 core proteins (UQCRC1 and UQCRC2) and 6 low-molecular weight proteins (UQCRH/QCR6, UQCRB/QCR7, UQCRQ/QCR8, UQCR10/QCR9, UQCR11/QCR10 and a cleavage product of UQCRFS1). This cytochrome bc1 complex then forms a dimer. Heme b is required as a cofactor.

Its subcellular location is the mitochondrion inner membrane. In terms of biological role, component of the ubiquinol-cytochrome c reductase complex (complex III or cytochrome b-c1 complex) that is part of the mitochondrial respiratory chain. The b-c1 complex mediates electron transfer from ubiquinol to cytochrome c. Contributes to the generation of a proton gradient across the mitochondrial membrane that is then used for ATP synthesis. This Platyrrhinus helleri (Heller's broad-nosed bat) protein is Cytochrome b (MT-CYB).